The following is a 219-amino-acid chain: Probable GTP-binding protein EngB (219 aa).

Residues 31–205 (VGVEIAFAGR…LSILNEWCHP (175 aa)) form the EngB-type G domain. Residues 39-46 (GRSNAGKS), 66-70 (GRTQL), 84-87 (DLPG), 151-154 (TKSD), and 184-186 (FSA) contribute to the GTP site. Residues serine 46 and threonine 68 each coordinate Mg(2+).

The protein belongs to the TRAFAC class TrmE-Era-EngA-EngB-Septin-like GTPase superfamily. EngB GTPase family. It depends on Mg(2+) as a cofactor.

Necessary for normal cell division and for the maintenance of normal septation. This Shewanella sp. (strain MR-7) protein is Probable GTP-binding protein EngB.